The sequence spans 324 residues: Disintegrin-like/cysteine-rich protein MPIII-3 (324 aa).

Positions 1-20 are cleaved as a signal peptide; the sequence is MIQVLLVIICLAVFPYQVSS. Positions 21–173 are cleaved as a propeptide — or 174 (in a minor form); that stretch reads IILESGNINN…DEDPKKCEFR (153 aa). In terms of domain architecture, Disintegrin; truncated spans 168–207; sequence KKCEFRRAGTECRPARSECDVAEYCTGQSAECPTDVFHSN. Residues 179–192 form an inhibits platelet aggregation region; the sequence is CRPARSECDVAEYC. 9 disulfide bridges follow: Cys179/Cys199, Cys186/Cys218, Cys192/Cys199, Cys211/Cys223, Cys230/Cys280, Cys245/Cys287, Cys258/Cys268, Cys275/Cys312, and Cys306/Cys317. Residues 185-187 carry the D/ECD-tripeptide motif; that stretch reads ECD. Ca(2+) contacts are provided by Asp187 and Glu190. Residues Asp202 and Val203 each coordinate Ca(2+). N-linked (GlcNAc...) asparagine glycosylation occurs at Asn237.

It belongs to the venom metalloproteinase (M12B) family. P-III subfamily. P-IIIe sub-subfamily. Monomer. Is able to form a homodimer. Post-translationally, N-glycosylated. Exists in at least six differently N-glycosylated forms. The glycans likely have a stabilizing purpose. In terms of processing, cys-199 forms a disulfide bond with Cys-192 in 90% and with Cys-179 in 10% of the protein molecules; alternative disulfide bonds may have a major effect on the conformation of the protein. In terms of tissue distribution, expressed by the venom gland (at protein level). Expressed by the venom gland.

Its subcellular location is the secreted. Its activity is regulated as follows. Activity may be regulated by the intramolecular thiol-disulfide exchange or disulfide bond switching. Functionally, abolishes platelet aggregation induced by collagen, ADP (IC(50)=292 nM) and arachidonic-acid. The inhibition of collagen-induced platelet aggregation may be due to its ability to bind collagen and block the binding site on collagen for platelets and/or to its ability to bind to the platelet alpha-2/beta-1 collagen receptor (ITGA2/ITGB1) to block its interaction with collagen and hence prevent platelet stimulation. The inhibition of ADP- or arachidonic-acid-induced platelet aggregation may be due to it acting as an antagonist of the ADP receptors or thromboxane-prostanoid receptors of the platelets, respectively. Does not interact with integrins alpha-IIb (ITGA2B) or beta-3 (ITGB3) nor platelet glycoproteins VI (GP6) or IX (GP9) in vitro, however, the detection is dependent on experimental conditions and may happen in vivo. Able to bind to platelet glycoprotein Ib alpha chain (GP1BA) receptor in vitro, although this interaction may have pathologically only limited effect in vivo as it is not able to abolish the von Willebrand factor (vWF)-dependent platelet agglutination induced by ristocetin. Does not affect blood coagulation. The sequence is that of Disintegrin-like/cysteine-rich protein MPIII-3 from Vipera ammodytes ammodytes (Western sand viper).